A 686-amino-acid polypeptide reads, in one-letter code: ATP-dependent zinc metalloprotease FtsH 2 (686 aa).

Over 1-11 the chain is Cytoplasmic; the sequence is MKKNIKDIFKN. A helical membrane pass occupies residues 12 to 32; it reads FNIFWFCFIFLLLSLLYCLIM. Residues 33–178 lie on the Extracellular side of the membrane; sequence MEISHQHDNN…LQRIPYQPYF (146 aa). The helical transmembrane segment at 179 to 199 threads the bilayer; the sequence is GFAPFISAVNICILIIIFYFI. Topologically, residues 200 to 686 are cytoplasmic; sequence YNSIEKTSAQ…QKSEKEDCNK (487 aa). 272–279 contacts ATP; the sequence is GPPGVGKT. Histidine 493 is a Zn(2+) binding site. Glutamate 494 is a catalytic residue. Zn(2+) is bound by residues histidine 497 and aspartate 569.

In the central section; belongs to the AAA ATPase family. This sequence in the C-terminal section; belongs to the peptidase M41 family. In terms of assembly, homohexamer. Zn(2+) serves as cofactor.

The protein resides in the cell membrane. In terms of biological role, acts as a processive, ATP-dependent zinc metallopeptidase for both cytoplasmic and membrane proteins. Plays a role in the quality control of integral membrane proteins. In Phytoplasma mali (strain AT), this protein is ATP-dependent zinc metalloprotease FtsH 2.